A 115-amino-acid chain; its full sequence is Putative UPF0320 protein YKL225W (115 aa).

The protein belongs to the UPF0320 family.

The polypeptide is Putative UPF0320 protein YKL225W (Saccharomyces cerevisiae (strain ATCC 204508 / S288c) (Baker's yeast)).